A 35-amino-acid chain; its full sequence is MEALVYTFLLVSTLGIIFFAIFFREPPRISTKKMK.

The helical transmembrane segment at 3-23 (ALVYTFLLVSTLGIIFFAIFF) threads the bilayer.

This sequence belongs to the PsbT family. In terms of assembly, PSII is composed of 1 copy each of membrane proteins PsbA, PsbB, PsbC, PsbD, PsbE, PsbF, PsbH, PsbI, PsbJ, PsbK, PsbL, PsbM, PsbT, PsbY, PsbZ, Psb30/Ycf12, at least 3 peripheral proteins of the oxygen-evolving complex and a large number of cofactors. It forms dimeric complexes.

The protein localises to the plastid. Its subcellular location is the chloroplast thylakoid membrane. Its function is as follows. Found at the monomer-monomer interface of the photosystem II (PS II) dimer, plays a role in assembly and dimerization of PSII. PSII is a light-driven water plastoquinone oxidoreductase, using light energy to abstract electrons from H(2)O, generating a proton gradient subsequently used for ATP formation. This chain is Photosystem II reaction center protein T, found in Saururus cernuus (Lizard's tail).